Reading from the N-terminus, the 128-residue chain is KRAB domain-containing protein 1 (128 aa).

Residues V15–D86 enclose the KRAB domain.

The protein is KRAB domain-containing protein 1 (KRBOX1) of Homo sapiens (Human).